Reading from the N-terminus, the 263-residue chain is Glutamate racemase (263 aa).

Residues D12–S13 and Y44–G45 contribute to the substrate site. Residue C75 is the Proton donor/acceptor of the active site. Residue N76–T77 coordinates substrate. The Proton donor/acceptor role is filled by C186. T187–H188 contacts substrate.

This sequence belongs to the aspartate/glutamate racemases family.

It carries out the reaction L-glutamate = D-glutamate. It functions in the pathway cell wall biogenesis; peptidoglycan biosynthesis. Provides the (R)-glutamate required for cell wall biosynthesis. This chain is Glutamate racemase, found in Ectopseudomonas mendocina (strain ymp) (Pseudomonas mendocina).